The sequence spans 202 residues: Peptide deformylase (202 aa).

Residues Met1–Glu24 are disordered. Residues Cys121 and His163 each contribute to the Fe cation site. Glu164 is a catalytic residue. His167 is a Fe cation binding site.

It belongs to the polypeptide deformylase family. Fe(2+) serves as cofactor.

The enzyme catalyses N-terminal N-formyl-L-methionyl-[peptide] + H2O = N-terminal L-methionyl-[peptide] + formate. Removes the formyl group from the N-terminal Met of newly synthesized proteins. Requires at least a dipeptide for an efficient rate of reaction. N-terminal L-methionine is a prerequisite for activity but the enzyme has broad specificity at other positions. This is Peptide deformylase from Prochlorococcus marinus (strain NATL2A).